The primary structure comprises 143 residues: Transcriptional regulator MraZ (143 aa).

SpoVT-AbrB domains follow at residues 5-47 (EYEH…TLEE) and 76-119 (AVEV…DRET).

The protein belongs to the MraZ family. In terms of assembly, forms oligomers.

It localises to the cytoplasm. Its subcellular location is the nucleoid. This Staphylococcus saprophyticus subsp. saprophyticus (strain ATCC 15305 / DSM 20229 / NCIMB 8711 / NCTC 7292 / S-41) protein is Transcriptional regulator MraZ.